The primary structure comprises 156 residues: Small ribosomal subunit protein uS7c (156 aa).

Belongs to the universal ribosomal protein uS7 family. In terms of assembly, part of the 30S ribosomal subunit.

Its subcellular location is the plastid. The protein localises to the chloroplast. One of the primary rRNA binding proteins, it binds directly to 16S rRNA where it nucleates assembly of the head domain of the 30S subunit. This chain is Small ribosomal subunit protein uS7c (rps7), found in Thalassiosira pseudonana (Marine diatom).